Reading from the N-terminus, the 479-residue chain is Anaerobic nitric oxide reductase flavorubredoxin (479 aa).

A zinc metallo-hydrolase region spans residues 30–210 (LRGSSYNSYL…PFSRLVTPKI (181 aa)). Fe cation is bound by residues His79, Glu81, Asp83, His147, Asp166, and His227. Positions 254–393 (ITIFYDTMSN…LCREHGREIA (140 aa)) constitute a Flavodoxin-like domain. FMN-binding positions include 260-264 (TMSNN) and 342-369 (AFGSHGWSGGAVDRLSTRLQDAGFEMSL). Positions 423–474 (GPRMQCSVCQWIYDPAKGEPMQDVAPGTPWSEVPDNFLCPECSLGKDVFEEL) constitute a Rubredoxin-like domain. Positions 428, 431, 461, and 464 each coordinate Fe cation.

This sequence in the N-terminal section; belongs to the zinc metallo-hydrolase group 3 family. As to quaternary structure, homotetramer. It depends on Fe cation as a cofactor. FMN is required as a cofactor.

The protein resides in the cytoplasm. The protein operates within nitrogen metabolism; nitric oxide reduction. Anaerobic nitric oxide reductase; uses NADH to detoxify nitric oxide (NO), protecting several 4Fe-4S NO-sensitive enzymes. Has at least 2 reductase partners, only one of which (NorW, flavorubredoxin reductase) has been identified. NO probably binds to the di-iron center; electrons enter from the NorW at rubredoxin and are transferred sequentially to the FMN center and the di-iron center. Also able to function as an aerobic oxygen reductase. The chain is Anaerobic nitric oxide reductase flavorubredoxin from Shigella boydii serotype 4 (strain Sb227).